The primary structure comprises 1415 residues: DNA-directed RNA polymerase subunit beta' (1415 aa).

4 residues coordinate Zn(2+): cysteine 72, cysteine 74, cysteine 87, and cysteine 90. Mg(2+) is bound by residues aspartate 463, aspartate 465, and aspartate 467. The Zn(2+) site is built by cysteine 811, cysteine 885, cysteine 892, and cysteine 895.

It belongs to the RNA polymerase beta' chain family. As to quaternary structure, the RNAP catalytic core consists of 2 alpha, 1 beta, 1 beta' and 1 omega subunit. When a sigma factor is associated with the core the holoenzyme is formed, which can initiate transcription. Requires Mg(2+) as cofactor. Zn(2+) serves as cofactor.

It carries out the reaction RNA(n) + a ribonucleoside 5'-triphosphate = RNA(n+1) + diphosphate. Its function is as follows. DNA-dependent RNA polymerase catalyzes the transcription of DNA into RNA using the four ribonucleoside triphosphates as substrates. The chain is DNA-directed RNA polymerase subunit beta' from Cereibacter sphaeroides (strain ATCC 17023 / DSM 158 / JCM 6121 / CCUG 31486 / LMG 2827 / NBRC 12203 / NCIMB 8253 / ATH 2.4.1.) (Rhodobacter sphaeroides).